The sequence spans 803 residues: MDTSQDIVIADSNTTDNVEVRSISPRVAAIFDDIYYFFYKEIDIEFTRYTDNKLISERMYGKRIDFFISILYITRNIIESYNNVELLKCFFKMLNHCSKPNENIENFLMKLFTYLHSDSILDNIEIIRALRDNKLKIRRETQDYLNQILDKFYKKPKEAEERDGDDGLPMEFVRQDTLSKLFREIYNDIRDLLPEPIQVRHLLSRNIDGTFKLKEVLFYEFDRVSEDHWFYDDGKQSNIYSPEEINNNTNNKNSVLLDANDKNENNNNNNDDADDAAADDADDADDDDMDDESDSNNNNKNSNNKNSNNKNSNENNKNKRTKSSSKSPQLPGLWTDEECRSLIKAVMIIGHRWIKIKEDYYSTSKRKPSQLKDKMRSLRKRYGDIKNIAIAYFTKAEIIEIEKLAVLFQQKEEAQKLAKEKIDSLSNIKSTSNTSAASGHNKGKNENNDSDEEVDQDSDNDSNNEDNQNESESENEDENDNNEKEKEKRNKKNSAVPPAPAPPKKLKPIEEEESDEEHNDSEEDSQEDSEENEYIIKQKRKSNQIKSSPKKLKTNQSVDKSEDVNQSHKSKLKSKPQRKVEKEESEKEESEEEESEEEEEEDDEDYESEEDKKKKKSKKTPSNQTSTHTTTTTTTTRKSNTKPIVVSSEEDSSDEEEKRRTKTLSKKSNQTPTTPTKKPSQTPTTPTKKSNQTPTTPTKKPSQTPITPTKKPNQTPTTPTKKSSQTPITPTKKSTNRPKSIEEEENEQEEQHEKNQNKPLKKRVSEDWSNSSDKTSNKRFKSPETLNKDSKENKKTISNSRRK.

2 disordered regions span residues 237-333 (SNIY…LPGL) and 429-803 (KSTS…SRRK). Positions 258–323 (DANDKNENNN…ENNKNKRTKS (66 aa)) form a coiled coil. Residues 271 to 294 (DDADDAAADDADDADDDDMDDESD) are compositionally biased toward acidic residues. Residues 295-315 (SNNNNKNSNNKNSNNKNSNEN) are compositionally biased toward low complexity. A Myb-like domain is found at 332-379 (GLWTDEECRSLIKAVMIIGHRWIKIKEDYYSTSKRKPSQLKDKMRSLR). 2 coiled-coil regions span residues 400-429 (EIEKLAVLFQQKEEAQKLAKEKIDSLSNIK) and 463-496 (NNEDNQNESESENEDENDNNEKEKEKRNKKNSAV). Polar residues predominate over residues 429 to 438 (KSTSNTSAAS). Composition is skewed to acidic residues over residues 448-480 (NDSDEEVDQDSDNDSNNEDNQNESESENEDEND) and 510-533 (EEEESDEEHNDSEEDSQEDSEENE). Basic residues-rich tracts occupy residues 537–553 (KQKRKSNQIKSSPKKLK) and 568–577 (HKSKLKSKPQ). Residues 573–616 (KSKPQRKVEKEESEKEESEEEESEEEEEEDDEDYESEEDKKKKK) adopt a coiled-coil conformation. A compositionally biased stretch (acidic residues) spans 586-609 (EKEESEEEESEEEEEEDDEDYESE). Low complexity-rich tracts occupy residues 625–636 (TSTHTTTTTTTT) and 666–733 (KKSN…PTKK). Residues 786 to 795 (LNKDSKENKK) show a composition bias toward basic and acidic residues.

This chain is Myb-like protein V (mybV), found in Dictyostelium discoideum (Social amoeba).